A 175-amino-acid chain; its full sequence is MSERIIMDEAAIQRTVTRIAHEILEYNKGTDNLILLGIKTRGAFLARRIQQKIEQIDEIAVPTGTIDITQFRDDLEQTINQVDERSYEIDVNITNQVVIIIDDVLYTGRTVRASLDAVLQYARPKKIGLATLVDRGHRELPIRADFVGKNIPTAKEEDVSVYLEEIDERNAVVIE.

Residues 40 to 41, R85, 102 to 110, R135, and V159 each bind substrate; these read TR and DDVLYTGRT. A PRPP-binding motif is present at residues 98–110; sequence VIIIDDVLYTGRT.

Belongs to the purine/pyrimidine phosphoribosyltransferase family. PyrR subfamily. As to quaternary structure, homodimer and homohexamer; in equilibrium.

It catalyses the reaction UMP + diphosphate = 5-phospho-alpha-D-ribose 1-diphosphate + uracil. Its function is as follows. Regulates transcriptional attenuation of the pyrimidine nucleotide (pyr) operon by binding in a uridine-dependent manner to specific sites on pyr mRNA. This disrupts an antiterminator hairpin in the RNA and favors formation of a downstream transcription terminator, leading to a reduced expression of downstream genes. Functionally, also displays a weak uracil phosphoribosyltransferase activity which is not physiologically significant. This is Bifunctional protein PyrR from Staphylococcus saprophyticus subsp. saprophyticus (strain ATCC 15305 / DSM 20229 / NCIMB 8711 / NCTC 7292 / S-41).